The following is a 113-amino-acid chain: MNTLDFVDQSSLRDDVPAFGPGDTVNVHVKVIEGSKERIQVFKGVVLRRQGGGVRETFTVRKESYGVGVERTFPVHSPNIDHIDIVSRGDVRRAKLYYLRELRGKKAKIKEKR.

Belongs to the bacterial ribosomal protein bL19 family.

This protein is located at the 30S-50S ribosomal subunit interface and may play a role in the structure and function of the aminoacyl-tRNA binding site. The protein is Large ribosomal subunit protein bL19 of Mycolicibacterium vanbaalenii (strain DSM 7251 / JCM 13017 / BCRC 16820 / KCTC 9966 / NRRL B-24157 / PYR-1) (Mycobacterium vanbaalenii).